The chain runs to 747 residues: Myotubularin-related protein 12 (747 aa).

Gly residues predominate over residues M1–K14. The segment at M1–V21 is disordered. Residues F205–Y643 form the Myotubularin phosphatase domain. The tract at residues V449–K558 is interaction with MTM1. S564, S601, and S716 each carry phosphoserine.

Belongs to the protein-tyrosine phosphatase family. Non-receptor class myotubularin subfamily. As to quaternary structure, heterodimer with lipid phosphatase MTM1. Heterodimer with lipid phosphatase MTMR2.

It is found in the cytoplasm. Its subcellular location is the sarcoplasmic reticulum. The protein localises to the myofibril. The protein resides in the sarcomere. In terms of biological role, acts as an adapter for the myotubularin-related phosphatases. Regulates phosphatase MTM1 protein stability and possibly its intracellular location. By stabilizing MTM1 protein levels, required for skeletal muscle maintenance but not for myogenesis. This Pongo abelii (Sumatran orangutan) protein is Myotubularin-related protein 12 (MTMR12).